The following is a 177-amino-acid chain: Large ribosomal subunit protein uL6 (177 aa).

Belongs to the universal ribosomal protein uL6 family. In terms of assembly, part of the 50S ribosomal subunit.

This protein binds to the 23S rRNA, and is important in its secondary structure. It is located near the subunit interface in the base of the L7/L12 stalk, and near the tRNA binding site of the peptidyltransferase center. This is Large ribosomal subunit protein uL6 from Hahella chejuensis (strain KCTC 2396).